The primary structure comprises 523 residues: DNA-directed primase/polymerase protein (523 aa).

Substrate-binding positions include arginine 78, 117–119 (DLE), and 168–172 (KFSHH). Mn(2+)-binding residues include aspartate 117 and glutamate 119. The segment at 203–230 (LKKSNPEAPGENRDDVEGTQAKRRKTEE) is disordered. Substrate contacts are provided by residues 258–261 (RNFR) and lysine 267. Zn(2+) is bound by residues cysteine 390, histidine 397, cysteine 417, and cysteine 422. The short motif at 390–423 (CHNVKRFHKSNNIIIVVDLKEEVWYQKCHDPECR) is the Zinc knuckle motif element. Residues 467–477 (APAESTSTTPS) are compositionally biased toward low complexity. Positions 467–523 (APAESTSTTPSEDTEGWGDWPDDPAYLRALQEVEEEEEDEDEEVPDELLLQAVNECE) are disordered. Acidic residues-rich tracts occupy residues 478 to 488 (EDTEGWGDWPD) and 498 to 512 (EVEE…EVPD).

This sequence belongs to the eukaryotic-type primase small subunit family. It depends on Mn(2+) as a cofactor.

It localises to the nucleus. The protein localises to the mitochondrion matrix. Its subcellular location is the chromosome. The catalysed reaction is ssDNA + n NTP = ssDNA/pppN(pN)n-1 hybrid + (n-1) diphosphate.. It carries out the reaction DNA(n) + a 2'-deoxyribonucleoside 5'-triphosphate = DNA(n+1) + diphosphate. Its function is as follows. DNA primase and DNA polymerase required to tolerate replication-stalling lesions by bypassing them. Required to facilitate mitochondrial and nuclear replication fork progression by initiating de novo DNA synthesis using dNTPs and acting as an error-prone DNA polymerase able to bypass certain DNA lesions. Shows a high capacity to tolerate DNA damage lesions such as 8oxoG and abasic sites in DNA. Provides different translesion synthesis alternatives when DNA replication is stalled: able to synthesize DNA primers downstream of lesions, such as UV lesions, R-loops and G-quadruplexes, to allow DNA replication to continue. Can also realign primers ahead of 'unreadable lesions' such as abasic sites and 6-4 photoproduct (6-4 pyrimidine-pyrimidinone), thereby skipping the lesion. Repriming avoids fork degradation while leading to accumulation of internal ssDNA gaps behind the forks. Also able to incorporate nucleotides opposite DNA lesions such as 8oxoG, like a regular translesion synthesis DNA polymerase. Also required for reinitiating stalled forks after ultraviolet (UV) damage during nuclear DNA replication. Required for mitochondrial DNA (mtDNA) synthesis and replication, by reinitiating synthesis after UV damage or in the presence of chain-terminating nucleotides. In addition to its role in DNA damage response, also required to maintain efficient nuclear and mitochondrial DNA replication in unperturbed cells. The polypeptide is DNA-directed primase/polymerase protein (Danio rerio (Zebrafish)).